The chain runs to 355 residues: dTDP-glucose 4,6-dehydratase (355 aa).

NAD(+)-binding positions include 12–13, 33–36, 59–60, 81–85, and T100; these read FI, DKLT, DI, and LAAES. S85 is a binding site for substrate. Residue T134 participates in substrate binding. The Proton donor role is filled by D135. Catalysis depends on proton acceptor residues E136 and Y160. 160 to 164 contributes to the NAD(+) binding site; it reads YSASK. Residue N189 coordinates substrate. N190 is an NAD(+) binding site. Substrate is bound by residues 199–200, 215–217, R224, N259, and 293–297; these read KL, PVY, and DRPGH.

It belongs to the NAD(P)-dependent epimerase/dehydratase family. dTDP-glucose dehydratase subfamily. Homodimer. NAD(+) serves as cofactor.

It carries out the reaction dTDP-alpha-D-glucose = dTDP-4-dehydro-6-deoxy-alpha-D-glucose + H2O. Its pathway is carbohydrate biosynthesis; dTDP-L-rhamnose biosynthesis. It functions in the pathway bacterial outer membrane biogenesis; LPS O-antigen biosynthesis. In terms of biological role, catalyzes the dehydration of dTDP-D-glucose to form dTDP-6-deoxy-D-xylo-4-hexulose via a three-step process involving oxidation, dehydration and reduction. The polypeptide is dTDP-glucose 4,6-dehydratase (rfbB1) (Neisseria meningitidis serogroup B (strain ATCC BAA-335 / MC58)).